A 693-amino-acid chain; its full sequence is Elongation factor G (693 aa).

The region spanning 8-284 (HMVRNIGIAA…AVIDYLPAPD (277 aa)) is the tr-type G domain. GTP is bound by residues 17–24 (AHIDAGKT), 81–85 (DTPGH), and 135–138 (NKMD).

This sequence belongs to the TRAFAC class translation factor GTPase superfamily. Classic translation factor GTPase family. EF-G/EF-2 subfamily.

Its subcellular location is the cytoplasm. Catalyzes the GTP-dependent ribosomal translocation step during translation elongation. During this step, the ribosome changes from the pre-translocational (PRE) to the post-translocational (POST) state as the newly formed A-site-bound peptidyl-tRNA and P-site-bound deacylated tRNA move to the P and E sites, respectively. Catalyzes the coordinated movement of the two tRNA molecules, the mRNA and conformational changes in the ribosome. In Nautilia profundicola (strain ATCC BAA-1463 / DSM 18972 / AmH), this protein is Elongation factor G.